Consider the following 93-residue polypeptide: Cobalt transport protein CbiN (93 aa).

The next 2 membrane-spanning stretches (helical) occupy residues 5 to 25 and 63 to 83; these read LMLL…NHGG and LLFT…LGYC.

This sequence belongs to the CbiN family. Forms an energy-coupling factor (ECF) transporter complex composed of an ATP-binding protein (A component, CbiO), a transmembrane protein (T component, CbiQ) and 2 possible substrate-capture proteins (S components, CbiM and CbiN) of unknown stoichimetry.

It is found in the cell inner membrane. Its pathway is cofactor biosynthesis; adenosylcobalamin biosynthesis. Part of the energy-coupling factor (ECF) transporter complex CbiMNOQ involved in cobalt import. The polypeptide is Cobalt transport protein CbiN (Salmonella arizonae (strain ATCC BAA-731 / CDC346-86 / RSK2980)).